A 342-amino-acid polypeptide reads, in one-letter code: Dihydroorotate dehydrogenase (quinone) (342 aa).

Residues 60-64 (AGFDK) and Thr84 contribute to the FMN site. Lys64 lines the substrate pocket. A substrate-binding site is contributed by 109-113 (NRMGF). Asn137 and Asn170 together coordinate FMN. Asn170 contributes to the substrate binding site. The Nucleophile role is filled by Ser173. Asn175 lines the substrate pocket. Positions 215 and 243 each coordinate FMN. 244 to 245 (NT) is a binding site for substrate. Residues Gly266, Gly295, and 316–317 (YT) each bind FMN.

Belongs to the dihydroorotate dehydrogenase family. Type 2 subfamily. As to quaternary structure, monomer. It depends on FMN as a cofactor.

The protein localises to the cell membrane. It carries out the reaction (S)-dihydroorotate + a quinone = orotate + a quinol. The protein operates within pyrimidine metabolism; UMP biosynthesis via de novo pathway; orotate from (S)-dihydroorotate (quinone route): step 1/1. Functionally, catalyzes the conversion of dihydroorotate to orotate with quinone as electron acceptor. The protein is Dihydroorotate dehydrogenase (quinone) of Halorhodospira halophila (strain DSM 244 / SL1) (Ectothiorhodospira halophila (strain DSM 244 / SL1)).